Here is a 383-residue protein sequence, read N- to C-terminus: Chaperone protein DnaJ (383 aa).

The J domain maps to 6–70 (DYYDVLGVGR…QKRAAYDQYG (65 aa)). The CR-type zinc-finger motif lies at 140 to 222 (GKETKISYSR…CHGTGREEER (83 aa)). Residues cysteine 153, cysteine 156, cysteine 170, cysteine 173, cysteine 196, cysteine 199, cysteine 210, and cysteine 213 each contribute to the Zn(2+) site. CXXCXGXG motif repeat units follow at residues 153–160 (CHTCHGSG), 170–177 (CHKCHGAG), 196–203 (CDVCGGTG), and 210–217 (CDTCHGTG).

The protein belongs to the DnaJ family. In terms of assembly, homodimer. It depends on Zn(2+) as a cofactor.

It is found in the cytoplasm. Its function is as follows. Participates actively in the response to hyperosmotic and heat shock by preventing the aggregation of stress-denatured proteins and by disaggregating proteins, also in an autonomous, DnaK-independent fashion. Unfolded proteins bind initially to DnaJ; upon interaction with the DnaJ-bound protein, DnaK hydrolyzes its bound ATP, resulting in the formation of a stable complex. GrpE releases ADP from DnaK; ATP binding to DnaK triggers the release of the substrate protein, thus completing the reaction cycle. Several rounds of ATP-dependent interactions between DnaJ, DnaK and GrpE are required for fully efficient folding. Also involved, together with DnaK and GrpE, in the DNA replication of plasmids through activation of initiation proteins. This is Chaperone protein DnaJ from Latilactobacillus sakei (Lactobacillus sakei).